Here is a 436-residue protein sequence, read N- to C-terminus: GTPase Der (436 aa).

EngA-type G domains are found at residues 4–167 and 176–351; these read PVVA…KNLP and VQFC…ENHA. GTP-binding positions include 10-17, 57-61, 119-122, 182-189, 229-233, and 294-297; these read GRPNVGKS, DTGGI, NKLD, DTAGM, and NKWD. Positions 352-436 constitute a KH-like domain; that stretch reads MRVQTNILND…PIKIFARARK (85 aa).

This sequence belongs to the TRAFAC class TrmE-Era-EngA-EngB-Septin-like GTPase superfamily. EngA (Der) GTPase family. In terms of assembly, associates with the 50S ribosomal subunit.

GTPase that plays an essential role in the late steps of ribosome biogenesis. This is GTPase Der from Bacillus pumilus (strain SAFR-032).